The primary structure comprises 371 residues: Glycosyltransferase 8 domain-containing protein 1 (371 aa).

The Cytoplasmic segment spans residues 1–5 (MSFRK). Residues 6-26 (VTIIIWALAVILFLLALHHNF) form a helical; Signal-anchor for type II membrane protein membrane-spanning segment. The Lumenal segment spans residues 27-371 (LSLSSLLRND…RRHMDTSNIK (345 aa)). N-linked (GlcNAc...) asparagine glycosylation occurs at Asn257.

The protein belongs to the glycosyltransferase 8 family.

It is found in the membrane. This chain is Glycosyltransferase 8 domain-containing protein 1 (Glt8d1), found in Rattus norvegicus (Rat).